Reading from the N-terminus, the 504-residue chain is MSIRPEEISAILKEQIERYQSEVEVSNVGSVIYVGDGIARVYGLQGAMAGELLEFTGGTFGMVLNLEEDNVGAVLLGEYNHIKEGDVVKATGRIMEVPAGSAMLGRVVNALGQPIDGKGPINTTAFRPLEKVAHGVVTRQPVTTPMQTGLKAIDSMVPIGRGQRELIIGDRQIGKTAIALDSIINQREKKDLICIYVAVGQKQASIAGIAAKFEEMGAMDYTIIVAATASEPAPLLYMAPYAGVAMAEEFMEAEGKDVLIIYDDLSKHAVAYREMSLLLRRPPGREAYPGDVFYLHSRLLERACRLNPDHGGGSITALPIIETQAGDVSAYIPTNVISITDGQIYLEADMFNAGQRPAVNAGLSVSRVGGSAQTKAMKSVAGQLRLDLAQYRELAAFAQFGSDLDKATLARLTRGERVTEILKQGQYQPMPVQEQVVSIYSGVNGYLDDIPRDKVGEFEVDFLKFMRSANADVLNAIKDTGKIDDATEQKLIKAINEFKSTFAV.

169-176 (GDRQIGKT) lines the ATP pocket.

It belongs to the ATPase alpha/beta chains family. F-type ATPases have 2 components, CF(1) - the catalytic core - and CF(0) - the membrane proton channel. CF(1) has five subunits: alpha(3), beta(3), gamma(1), delta(1), epsilon(1). CF(0) has three main subunits: a(1), b(2) and c(9-12). The alpha and beta chains form an alternating ring which encloses part of the gamma chain. CF(1) is attached to CF(0) by a central stalk formed by the gamma and epsilon chains, while a peripheral stalk is formed by the delta and b chains.

It is found in the cell membrane. It catalyses the reaction ATP + H2O + 4 H(+)(in) = ADP + phosphate + 5 H(+)(out). Its function is as follows. Produces ATP from ADP in the presence of a proton gradient across the membrane. The alpha chain is a regulatory subunit. The chain is ATP synthase subunit alpha from Syntrophomonas wolfei subsp. wolfei (strain DSM 2245B / Goettingen).